Consider the following 431-residue polypeptide: MTTHKLFLLSLGCSKNTVDSERLMAQAEASGIIFTETADEADTILINTCGFIEDAKEESITEILAAIDKKSEGTIQRLYVMGCLTELYRNELKEEMAEVDGFFGTRELPEILAALGAAYHEELYDHRSLLTPPHYTYLKIAEGCNRSCSFCSIPKIRGRYRSQPVEQLLREAILLKNSGVKELNIISQDISMFGYDTMGKSMLNDLVLRLSDMAFDWIRLLYAYPVNFPLEVIETMRERENICNYLDIPLQHCNDRILKSMNRGINKQESIQLIETVREKNPDIRLRTTMIAGYPGETREEFDELLEFVEANRFDRLGCFPYCHEEYAPSFALEDNVSAEEKQDRVAELMELQESVSQDKNRDFEGKEITVLIDQVEEGMAFGRTEYDAPEVDNECMLETGDFQVEPGMFCHARITDSTPFDLVGEVIGLV.

One can recognise an MTTase N-terminal domain in the interval 4–120 (HKLFLLSLGC…ILAALGAAYH (117 aa)). 6 residues coordinate [4Fe-4S] cluster: Cys-13, Cys-49, Cys-83, Cys-144, Cys-148, and Cys-151. One can recognise a Radical SAM core domain in the interval 130–359 (LTPPHYTYLK…MELQESVSQD (230 aa)). Residues 362–429 (RDFEGKEITV…PFDLVGEVIG (68 aa)) form the TRAM domain.

The protein belongs to the methylthiotransferase family. RimO subfamily. [4Fe-4S] cluster is required as a cofactor.

It localises to the cytoplasm. It catalyses the reaction L-aspartate(89)-[ribosomal protein uS12]-hydrogen + (sulfur carrier)-SH + AH2 + 2 S-adenosyl-L-methionine = 3-methylsulfanyl-L-aspartate(89)-[ribosomal protein uS12]-hydrogen + (sulfur carrier)-H + 5'-deoxyadenosine + L-methionine + A + S-adenosyl-L-homocysteine + 2 H(+). In terms of biological role, catalyzes the methylthiolation of an aspartic acid residue of ribosomal protein uS12. The chain is Ribosomal protein uS12 methylthiotransferase RimO from Pelodictyon phaeoclathratiforme (strain DSM 5477 / BU-1).